Here is a 122-residue protein sequence, read N- to C-terminus: Serum amyloid A-1 protein (122 aa).

An N-terminal signal peptide occupies residues 1–19 (MKLLTSLVFCSLLLGVCHG). An important for amyloid formation region spans residues 20–45 (GFFSFVHEAFQGAGDMWRAYTDMKEA). The segment covering 91–108 (HEDTIADQEANRHGRSGK) has biased composition (basic and acidic residues). A disordered region spans residues 91 to 122 (HEDTIADQEANRHGRSGKDPNYYRPPGLPDKY).

The protein belongs to the SAA family. In terms of assembly, homohexamer; dimer of trimers. Can form amyloid fibrils after partial proteolysis; the native, undenatured protein does not form amyloid fibrils (in vitro). Apolipoprotein of the HDL complex. Binds to heparin. As to expression, detected in blood plasma (at protein level). Detected in liver.

The protein localises to the secreted. Major acute phase protein. This Mus musculus (Mouse) protein is Serum amyloid A-1 protein (Saa1).